The chain runs to 668 residues: Endoplasmic reticulum oxidoreductin-1 (668 aa).

A signal peptide spans 1–22; sequence MKPASRLFYLSLFALWSPEAQC. Cystine bridges form between Cys79–Cys413, Cys89–Cys94, Cys150–Cys352, and Cys416–Cys419. The interval 116-142 is disordered; the sequence is KLEGPRAKHPGKSVQKEEPKRPLQGKL. Residues Arg186, Thr188, Trp199, Ser282, and His285 each coordinate FAD. N-linked (GlcNAc...) asparagine glycans are attached at residues Asn298 and Asn307. Residue Arg314 participates in FAD binding. N-linked (GlcNAc...) asparagine glycosylation is present at Asn406. Residue Cys416 is the Nucleophile of the active site. Cys419 is an active-site residue. N-linked (GlcNAc...) asparagine glycosylation is present at Asn443. Disordered stretches follow at residues 488 to 519 and 554 to 597; these read VEES…DRAK and GVTP…DPNF. The segment covering 494-509 has biased composition (polar residues); the sequence is GQQPQSHEQIEGSENS. Residues 570–581 are compositionally biased toward acidic residues; that stretch reads DNNDDDDDDDEF.

It belongs to the EROs family. May function both as a monomer and a homodimer. It depends on FAD as a cofactor.

Its subcellular location is the endoplasmic reticulum membrane. Essential oxidoreductase that oxidizes proteins in the endoplasmic reticulum to produce disulfide bonds. Acts by oxidizing directly pdi1 isomerase through a direct disulfide exchange. Does not act as a direct oxidant of folding substrate, but relies on pdi1 to transfer oxidizing equivalent. Does not oxidize all pdi related proteins, suggesting that it can discriminate between pdi1 and related proteins. Its reoxidation probably involves electron transfer to molecular oxygen via FAD. Acts independently of glutathione. May be responsible for a significant proportion of reactive oxygen species (ROS) in the cell, thereby being a source of oxidative stress. This chain is Endoplasmic reticulum oxidoreductin-1 (ero-1), found in Neurospora crassa (strain ATCC 24698 / 74-OR23-1A / CBS 708.71 / DSM 1257 / FGSC 987).